Here is a 269-residue protein sequence, read N- to C-terminus: UPF0761 membrane protein NTHI0384 (269 aa).

Transmembrane regions (helical) follow at residues 32–52 (MLAIVPLVMVIFSIFSAFPVF), 89–109 (MSAVGIVSLIAVALMLINNID), 128–148 (FAIYWMILTLGPLIIGVSIGI), 168–188 (LLSFVPFLFTWFIFTLIYTVV), 203–223 (FLAAIFFTLGKQAFTWYVVTF), and 232–252 (AMATLPIMLLWIQISWLVVLV).

Belongs to the UPF0761 family.

The protein resides in the cell inner membrane. The polypeptide is UPF0761 membrane protein NTHI0384 (Haemophilus influenzae (strain 86-028NP)).